The sequence spans 210 residues: Probable GTP-binding protein EngB (210 aa).

Residues 29-203 enclose the EngB-type G domain; the sequence is NGIEIAFAGR…SNKLDSWFAP (175 aa). GTP-binding positions include 37-44, 64-68, 82-85, 149-152, and 181-184; these read GRSNAGKS, GRTQL, DLPG, TKAD, and IYSA. Positions 44 and 66 each coordinate Mg(2+).

The protein belongs to the TRAFAC class TrmE-Era-EngA-EngB-Septin-like GTPase superfamily. EngB GTPase family. It depends on Mg(2+) as a cofactor.

In terms of biological role, necessary for normal cell division and for the maintenance of normal septation. The polypeptide is Probable GTP-binding protein EngB (Haemophilus ducreyi (strain 35000HP / ATCC 700724)).